Consider the following 234-residue polypeptide: Small ribosomal subunit protein uS3 (234 aa).

In terms of domain architecture, KH type-2 spans 39-107 (IRKFLKKELY…EVSINIKEVK (69 aa)).

Belongs to the universal ribosomal protein uS3 family. Part of the 30S ribosomal subunit. Forms a tight complex with proteins S10 and S14.

Binds the lower part of the 30S subunit head. Binds mRNA in the 70S ribosome, positioning it for translation. The sequence is that of Small ribosomal subunit protein uS3 from Helicobacter pylori (strain J99 / ATCC 700824) (Campylobacter pylori J99).